We begin with the raw amino-acid sequence, 806 residues long: Volume-regulated anion channel subunit LRRC8E (806 aa).

Residues 1–22 are Cytoplasmic-facing; that stretch reads MIPVAEFKQFTEQQPAFKVLKP. A helical transmembrane segment spans residues 23–43; sequence WWDVLAEYITYAMLMIGVFGC. Residues 44–130 are Extracellular-facing; sequence TLQVTQDKII…YETALHWYAK (87 aa). The cysteines at positions 54 and 311 are disulfide-linked. Residues N57 and N80 are each glycosylated (N-linked (GlcNAc...) asparagine). The disordered stretch occupies residues 75–104; that stretch reads QSSASNDSDLETTVPPPTATSSPPREMSGL. Residues 131-151 form a helical membrane-spanning segment; the sequence is YFPYLVVIHTLIFIICGNFWF. The Cytoplasmic segment spans residues 152–275; sequence KFPGTSSKIE…MRQTVLKVCK (124 aa). A disordered region spans residues 182–217; it reads EVSGESSQEKPNQERSIDRELSKPNFEEGSPATADL. Residues 188 to 207 are compositionally biased toward basic and acidic residues; it reads SQEKPNQERSIDRELSKPNF. Residues 276-296 traverse the membrane as a helical segment; that stretch reads FVLITIYNAVLVGKIHFIVPC. The Extracellular segment spans residues 297 to 323; it reads SVHTEDMTGYNSFCCNHTKAHLFSKLA. N312 is a glycosylation site (N-linked (GlcNAc...) asparagine). A helical membrane pass occupies residues 324–344; it reads ISYLCFLGVYGLTCFYTLYWL. Residues 345-806 lie on the Cytoplasmic side of the membrane; that stretch reads FRRPLKEYSF…VDVRDKFKED (462 aa). 9 LRR repeats span residues 569 to 589, 593 to 614, 616 to 637, 641 to 662, 664 to 685, 687 to 708, 710 to 731, 733 to 754, and 756 to 777; these read HLQK…NALK, LVKE…VFSL, NLQV…ISLQ, KLSV…IRKL, GLEE…LFLC, KLRH…IGVL, LLQY…LFFC, KLKT…VGSL, and CLVK…IGNC.

It belongs to the LRRC8 family. In terms of assembly, heterohexamer; oligomerizes with other LRRC8 proteins (lrrc8a, lrrc8c, lrrc8d and/or lrrc8b) to form a heterohexamer. Detected in a channel complex that contains lrrc8a, lrrc8c and lrrc8e. In vivo, the subunit composition may depend primarily on expression levels, and heterooligomeric channels containing various proportions of the different LRRC8 proteins may coexist.

It is found in the cell membrane. The protein resides in the endoplasmic reticulum membrane. It localises to the lysosome membrane. The enzyme catalyses chloride(in) = chloride(out). The catalysed reaction is iodide(out) = iodide(in). It catalyses the reaction taurine(out) = taurine(in). It carries out the reaction 2',3'-cGAMP(out) = 2',3'-cGAMP(in). Non-essential component of the volume-regulated anion channel (VRAC, also named VSOAC channel), an anion channel required to maintain a constant cell volume in response to extracellular or intracellular osmotic changes. The VRAC channel conducts iodide better than chloride and can also conduct organic osmolytes like taurine. Mediates efflux of amino acids, such as aspartate, in response to osmotic stress. The VRAC channel also mediates transport of immunoreactive cyclic dinucleotide GMP-AMP (2'-3'-cGAMP), an immune messenger produced in response to DNA virus in the cytosol. Channel activity requires lrrc8a plus at least one other family member (lrrc8b, lrrc8c, lrrc8d or lrrc8e); channel characteristics depend on the precise subunit composition. Also plays a role in lysosome homeostasis by forming functional lysosomal VRAC channels in response to low cytoplasmic ionic strength condition: lysosomal VRAC channels are necessary for the formation of large lysosome-derived vacuoles, which store and then expel excess water to maintain cytosolic water homeostasis. The polypeptide is Volume-regulated anion channel subunit LRRC8E (Xenopus laevis (African clawed frog)).